The following is a 148-amino-acid chain: Protein ADM2 (148 aa).

The N-terminal stretch at 1-24 is a signal peptide; the sequence is MARIPTAALGCISLLCLQLPGSLS. A propeptide spanning residues 25–98 is cleaved from the precursor; that stretch reads RSLGGDPRPV…HSGPRRHSGP (74 aa). Disordered stretches follow at residues 26 to 57 and 70 to 101; these read SLGGDPRPVKPREPPARSPSSSLQPRHPAPRP and RGAGLAPVMGQPLRDGGRQHSGPRRHSGPRRT. Cys110 and Cys115 are oxidised to a cystine. Position 147 is a tyrosine amide (Tyr147).

This sequence belongs to the adrenomedullin family. In terms of tissue distribution, expressed in the esophagus, stomach, jejunum, ileum, ileocecum, ascending colon, transverse colon, descending colon and rectum. Expressed in myocardial cells of the heart, renal tubular cells, hypothalamus, and pituitary.

It is found in the secreted. Intermedin/ADM2 is a peptide hormone that plays a role as physiological regulator of gastrointestinal and cardiovascular bioactivities mediated by the CALCRL-RAMPs receptor complexes. Activates the cAMP-dependent pathway through interaction with CALCRL-RAMP3 receptor complex. The polypeptide is Protein ADM2 (Homo sapiens (Human)).